A 217-amino-acid polypeptide reads, in one-letter code: UPF0319 protein HSM_0266 (217 aa).

A signal peptide spans 1–21 (MKFSFAALASAMLLTSTAAFA).

It belongs to the UPF0319 family.

This Histophilus somni (strain 2336) (Haemophilus somnus) protein is UPF0319 protein HSM_0266.